A 777-amino-acid polypeptide reads, in one-letter code: Phosphoribosylformylglycinamidine synthase subunit PurL (777 aa).

Residue histidine 50 is part of the active site. Positions 53 and 92 each coordinate ATP. Glutamate 94 contacts Mg(2+). Substrate contacts are provided by residues 95 to 98 and arginine 117; that span reads SHNH. Histidine 96 (proton acceptor) is an active-site residue. Aspartate 118 is a Mg(2+) binding site. Residue glutamine 241 participates in substrate binding. Position 269 (aspartate 269) interacts with Mg(2+). Substrate is bound at residue 313–315; sequence ESQ. Residues aspartate 516 and glycine 553 each contribute to the ATP site. A Mg(2+)-binding site is contributed by asparagine 554. Serine 556 contacts substrate.

This sequence belongs to the FGAMS family. As to quaternary structure, monomer. Part of the FGAM synthase complex composed of 1 PurL, 1 PurQ and 2 PurS subunits.

The protein localises to the cytoplasm. The catalysed reaction is N(2)-formyl-N(1)-(5-phospho-beta-D-ribosyl)glycinamide + L-glutamine + ATP + H2O = 2-formamido-N(1)-(5-O-phospho-beta-D-ribosyl)acetamidine + L-glutamate + ADP + phosphate + H(+). The protein operates within purine metabolism; IMP biosynthesis via de novo pathway; 5-amino-1-(5-phospho-D-ribosyl)imidazole from N(2)-formyl-N(1)-(5-phospho-D-ribosyl)glycinamide: step 1/2. Functionally, part of the phosphoribosylformylglycinamidine synthase complex involved in the purines biosynthetic pathway. Catalyzes the ATP-dependent conversion of formylglycinamide ribonucleotide (FGAR) and glutamine to yield formylglycinamidine ribonucleotide (FGAM) and glutamate. The FGAM synthase complex is composed of three subunits. PurQ produces an ammonia molecule by converting glutamine to glutamate. PurL transfers the ammonia molecule to FGAR to form FGAM in an ATP-dependent manner. PurS interacts with PurQ and PurL and is thought to assist in the transfer of the ammonia molecule from PurQ to PurL. The protein is Phosphoribosylformylglycinamidine synthase subunit PurL of Synechococcus elongatus (strain ATCC 33912 / PCC 7942 / FACHB-805) (Anacystis nidulans R2).